The following is a 445-amino-acid chain: Phosphoglucosamine mutase (445 aa).

Ser102 (phosphoserine intermediate) is an active-site residue. Residues Ser102, Asp241, Asp243, and Asp245 each coordinate Mg(2+). A Phosphoserine modification is found at Ser102.

The protein belongs to the phosphohexose mutase family. Mg(2+) serves as cofactor. Activated by phosphorylation.

The enzyme catalyses alpha-D-glucosamine 1-phosphate = D-glucosamine 6-phosphate. Its function is as follows. Catalyzes the conversion of glucosamine-6-phosphate to glucosamine-1-phosphate. The polypeptide is Phosphoglucosamine mutase (Salmonella paratyphi A (strain ATCC 9150 / SARB42)).